The primary structure comprises 451 residues: MLSKFKRNKHQQHLAQLPKISQSVDDVDFFYAPADFRETLLEKIASAKQRICIVALYLEQDDGGKGILNALYEAKRQRPELDVRVLVDWHRAQRGRIGAAASNTNADWYCRMAQENPGVDVPVYGVPINTREALGVLHFKGFIIDDSVLYSGASLNDVYLHQHDKYRYDRYHLIRNRKMSDIMFEWVTQNIMNGRGVNRLDDVNRPKSPEIKNDIRLFRQELRDAAYHFQGDADNDQLSVTPLVGLGKSSLLNKTIFHLMPCAEQKLTICTPYFNLPAILVRNIIQLLREGKKVEIIVGDKTANDFYIPEDEPFKIIGALPYLYEINLRRFLSRLQYYVNTDQLVVRLWKDDDNTYHLKGMWVDDKWMLITGNNLNPRAWRLDLENAILIHDPQLELAPQREKELELIREHTTIVKHYRDLQSIADYPVKVRKLIRRLRRIRIDRLISRIL.

PLD phosphodiesterase domains follow at residues 27–224 (VDFF…ELRD) and 239–451 (SVTP…SRIL). Residues L56, Y57, R91, R94, R96, I97, E132, A133, V136, H138, K140, G152, Y159, and R167 each coordinate a CDP-1,2-diacyl-sn-glycerol. H138 is an active-site residue. D169 is a catalytic residue. Positions 273, 305, 306, 316, 317, 320, 323, and 324 each coordinate a CDP-1,2-diacyl-sn-glycerol. H357 is an active-site residue. A CDP-1,2-diacyl-sn-glycerol-binding residues include K359, N374, and R378. E385 is an active-site residue. A CDP-1,2-diacyl-sn-glycerol contacts are provided by L438, I447, I450, and L451.

The protein belongs to the CDP-alcohol phosphatidyltransferase class-II family. In terms of assembly, multimeric. Interacts with ACP, YbgC and PlsB, forming altogether a complex at the inner membrane. Monomeric and dimeric; existing in equilibrium, but the monomer probably exhibits preferential membrane association.

It localises to the cytoplasm. The protein localises to the cell inner membrane. It catalyses the reaction a CDP-1,2-diacyl-sn-glycerol + L-serine = a 1,2-diacyl-sn-glycero-3-phospho-L-serine + CMP + H(+). It participates in phospholipid metabolism; phosphatidylethanolamine biosynthesis; phosphatidylethanolamine from CDP-diacylglycerol: step 1/2. Its function is as follows. Catalyzes the conversion of cytidine diphosphate diacylglycerol (CDP-DG) and L-serine into phosphatidylserine. Essential for biosynthesis of phosphatidylethanolamine, one of the major membrane phospholipids. Phosphatidylserine is later converted into phosphatidylethanolamine via the action of phosphatidylserine decarboxylase psd. Associates with the bacterial membrane for its role, which depends on the levels of anionic phospholipids in the membrane. In Escherichia coli (strain K12), this protein is CDP-diacylglycerol--serine O-phosphatidyltransferase PssA (pssA).